Reading from the N-terminus, the 236-residue chain is Phosphoribosylformylglycinamidine synthase subunit PurQ (236 aa).

Residues 2–234 (RFAVVTFPGS…LSVGLEVAHS (233 aa)) form the Glutamine amidotransferase type-1 domain. Residue Cys-86 is the Nucleophile of the active site. Active-site residues include His-203 and Glu-205.

In terms of assembly, part of the FGAM synthase complex composed of 1 PurL, 1 PurQ and 2 PurS subunits.

It is found in the cytoplasm. The catalysed reaction is N(2)-formyl-N(1)-(5-phospho-beta-D-ribosyl)glycinamide + L-glutamine + ATP + H2O = 2-formamido-N(1)-(5-O-phospho-beta-D-ribosyl)acetamidine + L-glutamate + ADP + phosphate + H(+). It carries out the reaction L-glutamine + H2O = L-glutamate + NH4(+). It functions in the pathway purine metabolism; IMP biosynthesis via de novo pathway; 5-amino-1-(5-phospho-D-ribosyl)imidazole from N(2)-formyl-N(1)-(5-phospho-D-ribosyl)glycinamide: step 1/2. Part of the phosphoribosylformylglycinamidine synthase complex involved in the purines biosynthetic pathway. Catalyzes the ATP-dependent conversion of formylglycinamide ribonucleotide (FGAR) and glutamine to yield formylglycinamidine ribonucleotide (FGAM) and glutamate. The FGAM synthase complex is composed of three subunits. PurQ produces an ammonia molecule by converting glutamine to glutamate. PurL transfers the ammonia molecule to FGAR to form FGAM in an ATP-dependent manner. PurS interacts with PurQ and PurL and is thought to assist in the transfer of the ammonia molecule from PurQ to PurL. The polypeptide is Phosphoribosylformylglycinamidine synthase subunit PurQ (Thermomicrobium roseum (strain ATCC 27502 / DSM 5159 / P-2)).